The primary structure comprises 259 residues: ATP synthase subunit b 3 (259 aa).

Residues 5–27 form a helical membrane-spanning segment; it reads WWTLGLQAINVLILIWILSRFLF.

The protein belongs to the ATPase B chain family. In terms of assembly, F-type ATPases have 2 components, F(1) - the catalytic core - and F(0) - the membrane proton channel. F(1) has five subunits: alpha(3), beta(3), gamma(1), delta(1), epsilon(1). F(0) has three main subunits: a(1), b(2) and c(10-14). The alpha and beta chains form an alternating ring which encloses part of the gamma chain. F(1) is attached to F(0) by a central stalk formed by the gamma and epsilon chains, while a peripheral stalk is formed by the delta and b chains.

The protein localises to the cell inner membrane. Its function is as follows. F(1)F(0) ATP synthase produces ATP from ADP in the presence of a proton or sodium gradient. F-type ATPases consist of two structural domains, F(1) containing the extramembraneous catalytic core and F(0) containing the membrane proton channel, linked together by a central stalk and a peripheral stalk. During catalysis, ATP synthesis in the catalytic domain of F(1) is coupled via a rotary mechanism of the central stalk subunits to proton translocation. Component of the F(0) channel, it forms part of the peripheral stalk, linking F(1) to F(0). The sequence is that of ATP synthase subunit b 3 from Beijerinckia indica subsp. indica (strain ATCC 9039 / DSM 1715 / NCIMB 8712).